We begin with the raw amino-acid sequence, 258 residues long: Short-chain dehydrogenase/reductase aba4 (258 aa).

Residues Ile20, Asp66, and Lys130 each coordinate NADP(+). Residues Ser146 and Tyr160 each act as proton donor in the active site. Positions 160, 164, 193, and 195 each coordinate NADP(+). Lys164 functions as the Lowers pKa of active site Tyr in the catalytic mechanism.

Belongs to the short-chain dehydrogenases/reductases (SDR) family.

It participates in hormone biosynthesis. Its function is as follows. Short-chain dehydrogenase/reductase; part of the gene cluster that mediates the biosynthesis of abscisic acid (ABA), a phytohormone that acts antagonistically toward salicylic acid (SA), jasmonic acid (JA) and ethylene (ETH) signaling, to impede plant defense responses. The first step of the pathway catalyzes the reaction from farnesyl diphosphate to alpha-ionylideneethane performed by the alpha-ionylideneethane synthase aba3 via a three-step reaction mechanism involving 2 neutral intermediates, beta-farnesene and allofarnesene. The cytochrome P450 monooxygenase aba1 might then be involved in the conversion of alpha-ionylideneethane to alpha-ionylideneacetic acid. Alpha-ionylideneacetic acid is further converted to abscisic acid in 2 steps involving the cytochrome P450 monooxygenase aba2 and the short-chain dehydrogenase/reductase aba4, via the intermediates 1'-deoxy-ABA or 1',4'-trans-diol-ABA, depending on the order of action of these 2 enzymes. Aba2 is responsible for the hydroxylation of carbon atom C-1' and aba4 might be involved in the oxidation of the C-4' carbon atom. This chain is Short-chain dehydrogenase/reductase aba4, found in Botryotinia fuckeliana (Noble rot fungus).